The primary structure comprises 180 residues: Thebaine synthase 1 (180 aa).

Residue S96 participates in thebaine binding. H111 (proton acceptor) is an active-site residue. T127 lines the thebaine pocket.

The protein belongs to the MLP family. As to quaternary structure, homodimer (allosteric) and oligomers. As to expression, expressed in poppy latex.

The enzyme catalyses (7S)-O-acetylsalutaridinol = thebaine + acetate + H(+). The protein operates within alkaloid biosynthesis; morphine biosynthesis. In terms of biological role, catalyzes the formation of thebaine from (7S)-salutaridinol 7-O-acetate at the expense of labile hydroxylated by-products, which are preferentially produced by spontaneous allylic elimination. The polypeptide is Thebaine synthase 1 (Papaver somniferum (Opium poppy)).